Consider the following 343-residue polypeptide: Cytoplasmic tRNA 2-thiolation protein 1 (343 aa).

This sequence belongs to the TtcA family. CTU1/NCS6/ATPBD3 subfamily.

Its subcellular location is the cytoplasm. Its pathway is tRNA modification; 5-methoxycarbonylmethyl-2-thiouridine-tRNA biosynthesis. In terms of biological role, plays a central role in 2-thiolation of mcm(5)S(2)U at tRNA wobble positions of tRNA(Lys), tRNA(Glu) and tRNA(Gln). Directly binds tRNAs and probably acts by catalyzing adenylation of tRNAs, an intermediate required for 2-thiolation. It is unclear whether it acts as a sulfurtransferase that transfers sulfur from thiocarboxylated URM1 onto the uridine of tRNAs at wobble position. The chain is Cytoplasmic tRNA 2-thiolation protein 1 from Drosophila erecta (Fruit fly).